The chain runs to 655 residues: Fidgetin-like protein 1 (655 aa).

The disordered stretch occupies residues 289–313 (QQKKHSNQPQRNPGPLYGGGKKSLG). ATP contacts are provided by residues Ala-385 and 425 to 430 (GTGKTL).

Belongs to the AAA ATPase family. As to quaternary structure, hexamer. Mg(2+) serves as cofactor.

The protein resides in the nucleus. The protein localises to the cytoplasm. Its subcellular location is the perinuclear region. It catalyses the reaction ATP + H2O = ADP + phosphate + H(+). Its function is as follows. May be involved in DNA double-strand break (DBS) repair via homologous recombination (HR). May regulate osteoblast proliferation and differentiation. The chain is Fidgetin-like protein 1 (fignl1) from Xenopus laevis (African clawed frog).